Consider the following 180-residue polypeptide: UPF0340 protein YwlG (180 aa).

It belongs to the UPF0340 family.

The sequence is that of UPF0340 protein YwlG (ywlG) from Bacillus subtilis (strain 168).